Consider the following 1061-residue polypeptide: Carbamoyl phosphate synthase large chain (1061 aa).

The segment at 1–401 is carboxyphosphate synthetic domain; the sequence is MPKRTDVHKI…ALQKAVRSLE (401 aa). Arginine 129, arginine 169, glycine 175, glycine 176, lysine 208, isoleucine 210, glutamate 215, glycine 241, isoleucine 242, histidine 243, glutamine 284, and glutamate 298 together coordinate ATP. Residues 133–327 form the ATP-grasp 1 domain; the sequence is KDLMQELNEP…IAKLAAKIAV (195 aa). Glutamine 284, glutamate 298, and asparagine 300 together coordinate Mg(2+). Residues glutamine 284, glutamate 298, and asparagine 300 each contribute to the Mn(2+) site. Residues 402–546 are oligomerization domain; that stretch reads IDEKDLISAK…YSSYDLENES (145 aa). The carbamoyl phosphate synthetic domain stretch occupies residues 547–929; sequence KKSDKKSVLV…ALYKAFTGAK (383 aa). Residues 671-861 enclose the ATP-grasp 2 domain; it reads DQTIKNLGLK…MAQVATRVIL (191 aa). Residues arginine 707, alanine 746, leucine 748, glutamate 752, glycine 777, valine 778, histidine 779, serine 780, glutamine 820, and glutamate 832 each contribute to the ATP site. Mg(2+)-binding residues include glutamine 820, glutamate 832, and asparagine 834. Mn(2+) contacts are provided by glutamine 820, glutamate 832, and asparagine 834. One can recognise an MGS-like domain in the interval 930–1061; the sequence is MELPDNGNVL…ENRSFATNSL (132 aa). The interval 930–1061 is allosteric domain; it reads MELPDNGNVL…ENRSFATNSL (132 aa).

This sequence belongs to the CarB family. As to quaternary structure, composed of two chains; the small (or glutamine) chain promotes the hydrolysis of glutamine to ammonia, which is used by the large (or ammonia) chain to synthesize carbamoyl phosphate. Tetramer of heterodimers (alpha,beta)4. Mg(2+) serves as cofactor. It depends on Mn(2+) as a cofactor.

The enzyme catalyses hydrogencarbonate + L-glutamine + 2 ATP + H2O = carbamoyl phosphate + L-glutamate + 2 ADP + phosphate + 2 H(+). It carries out the reaction hydrogencarbonate + NH4(+) + 2 ATP = carbamoyl phosphate + 2 ADP + phosphate + 2 H(+). It participates in amino-acid biosynthesis; L-arginine biosynthesis; carbamoyl phosphate from bicarbonate: step 1/1. It functions in the pathway pyrimidine metabolism; UMP biosynthesis via de novo pathway; (S)-dihydroorotate from bicarbonate: step 1/3. Functionally, large subunit of the glutamine-dependent carbamoyl phosphate synthetase (CPSase). CPSase catalyzes the formation of carbamoyl phosphate from the ammonia moiety of glutamine, carbonate, and phosphate donated by ATP, constituting the first step of 2 biosynthetic pathways, one leading to arginine and/or urea and the other to pyrimidine nucleotides. The large subunit (synthetase) binds the substrates ammonia (free or transferred from glutamine from the small subunit), hydrogencarbonate and ATP and carries out an ATP-coupled ligase reaction, activating hydrogencarbonate by forming carboxy phosphate which reacts with ammonia to form carbamoyl phosphate. The protein is Carbamoyl phosphate synthase large chain of Ligilactobacillus salivarius (strain UCC118) (Lactobacillus salivarius).